A 211-amino-acid polypeptide reads, in one-letter code: Ribosomal RNA small subunit methyltransferase G (211 aa).

S-adenosyl-L-methionine is bound by residues G73, 126 to 127 (IE), and R142.

It belongs to the methyltransferase superfamily. RNA methyltransferase RsmG family.

It localises to the cytoplasm. It carries out the reaction guanosine(527) in 16S rRNA + S-adenosyl-L-methionine = N(7)-methylguanosine(527) in 16S rRNA + S-adenosyl-L-homocysteine. In terms of biological role, specifically methylates the N7 position of guanine in position 527 of 16S rRNA. The sequence is that of Ribosomal RNA small subunit methyltransferase G from Methylorubrum populi (strain ATCC BAA-705 / NCIMB 13946 / BJ001) (Methylobacterium populi).